Reading from the N-terminus, the 160-residue chain is 2-C-methyl-D-erythritol 2,4-cyclodiphosphate synthase (160 aa).

Residues aspartate 11 and histidine 13 each contribute to the a divalent metal cation site. 4-CDP-2-C-methyl-D-erythritol 2-phosphate contacts are provided by residues 11 to 13 (DVH) and 37 to 38 (HS). Histidine 45 contributes to the a divalent metal cation binding site. 4-CDP-2-C-methyl-D-erythritol 2-phosphate-binding positions include 59–61 (DIG), 64–68 (FPDTD), 103–109 (AQAPKMA), 135–138 (TTTE), phenylalanine 142, and arginine 145.

It belongs to the IspF family. In terms of assembly, homotrimer. A divalent metal cation is required as a cofactor.

It carries out the reaction 4-CDP-2-C-methyl-D-erythritol 2-phosphate = 2-C-methyl-D-erythritol 2,4-cyclic diphosphate + CMP. It participates in isoprenoid biosynthesis; isopentenyl diphosphate biosynthesis via DXP pathway; isopentenyl diphosphate from 1-deoxy-D-xylulose 5-phosphate: step 4/6. Involved in the biosynthesis of isopentenyl diphosphate (IPP) and dimethylallyl diphosphate (DMAPP), two major building blocks of isoprenoid compounds. Catalyzes the conversion of 4-diphosphocytidyl-2-C-methyl-D-erythritol 2-phosphate (CDP-ME2P) to 2-C-methyl-D-erythritol 2,4-cyclodiphosphate (ME-CPP) with a corresponding release of cytidine 5-monophosphate (CMP). This chain is 2-C-methyl-D-erythritol 2,4-cyclodiphosphate synthase, found in Thiobacillus denitrificans (strain ATCC 25259 / T1).